The chain runs to 396 residues: MAVQESAAQLSMTLKVQEYPTLKVPYETLNKRFRAAQKNIDRETSHVTMVVAELEKTLSSCPAVDSVVSLLDGVVEKLSVLKRKAVESIQAEDESAKLCKRRIEHLKEHSSDQPAAASMWKRKRMDRMMVEHLLRCGYYNTAVKLARQSGIEDLVNIEMFLTAKEVEESLERRETATCLAWCHDNKSRLRKMKSCLEFSLRIQEFIELVRQNKRLDAVRHARKHFSQAEGSQLDEVRQVMGMLAFPPDTHISPYKDLLDPARWRMLIQQFRYDNYRLHQLGNSSVFTLTLQAGLSAIKTPQCYKEDGSSKSPDCPVCSRSLNKLAQPLPMAHCANSRLVCKISGDVMNENNPPMMLPNGYVYGYNSLLSIRQDDKVVCPRTKEVFHFSQAEKVYIM.

The extracellular and involved in cell to cell contact stretch occupies residues 1 to 124 (MAVQESAAQL…AAASMWKRKR (124 aa)). The residue at position 28 (threonine 28) is a Phosphothreonine. Positions 121–153 (KRKRMDRMMVEHLLRCGYYNTAVKLARQSGIED) constitute a LisH domain. The CTLH domain occupies 159–216 (MFLTAKEVEESLERRETATCLAWCHDNKSRLRKMKSCLEFSLRIQEFIELVRQNKRLD). The segment at 314-381 (CPVCSRSLNK…QDDKVVCPRT (68 aa)) adopts an RING-Gid-type zinc-finger fold.

As to quaternary structure, identified in the CTLH complex that contains GID4, RANBP9 and/or RANBP10, MKLN1, MAEA, RMND5A (or alternatively its paralog RMND5B), GID8, ARMC8, WDR26 and YPEL5. Within this complex, MAEA, RMND5A (or alternatively its paralog RMND5B), GID8, WDR26, and RANBP9 and/or RANBP10 form the catalytic core, while GID4, MKLN1, ARMC8 and YPEL5 have ancillary roles. Interacts with F-actin. Post-translationally, autoubiquitinated as component of the CTLH E3 ubiquitin-protein ligase complex (in vitro). In terms of tissue distribution, detected in embryonic fibroblasts. Detected in macrophages. Detected in heart. liver, spleen and kidney (at protein level).

It localises to the cytoplasm. The protein resides in the nucleus. It is found in the nucleoplasm. The protein localises to the nucleus matrix. Its subcellular location is the cell membrane. It localises to the cytoskeleton. The catalysed reaction is S-ubiquitinyl-[E2 ubiquitin-conjugating enzyme]-L-cysteine + [acceptor protein]-L-lysine = [E2 ubiquitin-conjugating enzyme]-L-cysteine + N(6)-ubiquitinyl-[acceptor protein]-L-lysine.. Functionally, core component of the CTLH E3 ubiquitin-protein ligase complex that selectively accepts ubiquitin from UBE2H and mediates ubiquitination and subsequent proteasomal degradation of the transcription factor HBP1. MAEA and RMND5A are both required for catalytic activity of the CTLH E3 ubiquitin-protein ligase complex. MAEA is required for normal cell proliferation. The CTLH E3 ubiquitin-protein ligase complex is not required for the degradation of enzymes involved in gluconeogenesis, such as FBP1. Plays a role in erythroblast enucleation during erythrocyte maturation and in the development of mature macrophages. Mediates the attachment of erythroid cell to mature macrophages; this MAEA-mediated contact inhibits erythroid cell apoptosis. Participates in erythroblastic island formation, which is the functional unit of definitive erythropoiesis. Associates with F-actin to regulate actin distribution in erythroblasts and macrophages. May contribute to nuclear architecture and cells division events. The sequence is that of E3 ubiquitin-protein transferase MAEA (Maea) from Mus musculus (Mouse).